The primary structure comprises 288 residues: Tryptophan 2,3-dioxygenase (288 aa).

Residues 57 to 61 (FIIQH), Tyr119, and Arg123 contribute to the substrate site. His246 is a binding site for heme. Thr260 is a substrate binding site.

This sequence belongs to the tryptophan 2,3-dioxygenase family. Homotetramer. The cofactor is heme.

The catalysed reaction is L-tryptophan + O2 = N-formyl-L-kynurenine. It participates in amino-acid degradation; L-tryptophan degradation via kynurenine pathway; L-kynurenine from L-tryptophan: step 1/2. Heme-dependent dioxygenase that catalyzes the oxidative cleavage of the L-tryptophan (L-Trp) pyrrole ring and converts L-tryptophan to N-formyl-L-kynurenine. Catalyzes the oxidative cleavage of the indole moiety. This is Tryptophan 2,3-dioxygenase from Pseudomonas aeruginosa (strain UCBPP-PA14).